Here is a 210-residue protein sequence, read N- to C-terminus: Cdc42 effector protein 2 (210 aa).

Position 2 is an N-acetylserine (Ser-2). Residues 30–44 (ISPPLGDFRHTIHIG) enclose the CRIB domain. 3 positions are modified to phosphoserine: Ser-31, Ser-101, and Ser-141. The segment at 124–145 (AQAPPKPPRLHLETPQASPQEA) is disordered.

This sequence belongs to the BORG/CEP family. In terms of assembly, interacts with CDC42 and RHOQ, in a GTP-dependent manner, and with SEPT7.

The protein resides in the endomembrane system. Its subcellular location is the cytoplasm. It is found in the cytoskeleton. Its function is as follows. Probably involved in the organization of the actin cytoskeleton. May act downstream of CDC42 to induce actin filament assembly leading to cell shape changes. Induces pseudopodia formation in fibroblasts in a CDC42-dependent manner. The protein is Cdc42 effector protein 2 (CDC42EP2) of Bos taurus (Bovine).